The sequence spans 234 residues: Glucosamine-6-phosphate deaminase (234 aa).

Residue D63 is the Proton acceptor; for enolization step of the active site. N129 (for ring-opening step) is an active-site residue. Residue H131 is the Proton acceptor; for ring-opening step of the active site. E136 (for ring-opening step) is an active-site residue.

It belongs to the glucosamine/galactosamine-6-phosphate isomerase family. NagB subfamily.

The catalysed reaction is alpha-D-glucosamine 6-phosphate + H2O = beta-D-fructose 6-phosphate + NH4(+). It functions in the pathway amino-sugar metabolism; N-acetylneuraminate degradation; D-fructose 6-phosphate from N-acetylneuraminate: step 5/5. In terms of biological role, catalyzes the reversible isomerization-deamination of glucosamine 6-phosphate (GlcN6P) to form fructose 6-phosphate (Fru6P) and ammonium ion. This Listeria monocytogenes serotype 4a (strain HCC23) protein is Glucosamine-6-phosphate deaminase.